The primary structure comprises 124 residues: Ribonuclease pancreatic (124 aa).

The disordered stretch occupies residues 1-23; it reads RESPAMKFQRQHMDSGNSPGNNP. 2 residues coordinate substrate: lysine 7 and arginine 10. Histidine 12 functions as the Proton acceptor in the catalytic mechanism. A compositionally biased stretch (polar residues) spans 14 to 23; it reads DSGNSPGNNP. 4 disulfide bridges follow: cysteine 26-cysteine 84, cysteine 40-cysteine 95, cysteine 58-cysteine 110, and cysteine 65-cysteine 72. Substrate-binding positions include 41–45 and lysine 66; that span reads KPVNT. An N-linked (GlcNAc...) asparagine; partial glycan is attached at asparagine 76. Residue arginine 85 coordinates substrate. Histidine 119 (proton donor) is an active-site residue.

This sequence belongs to the pancreatic ribonuclease family. Monomer. Interacts with and forms tight 1:1 complexes with RNH1. Dimerization of two such complexes may occur. Interaction with RNH1 inhibits this protein. In terms of tissue distribution, pancreas.

Its subcellular location is the secreted. It carries out the reaction an [RNA] containing cytidine + H2O = an [RNA]-3'-cytidine-3'-phosphate + a 5'-hydroxy-ribonucleotide-3'-[RNA].. It catalyses the reaction an [RNA] containing uridine + H2O = an [RNA]-3'-uridine-3'-phosphate + a 5'-hydroxy-ribonucleotide-3'-[RNA].. Its function is as follows. Endonuclease that catalyzes the cleavage of RNA on the 3' side of pyrimidine nucleotides. Acts on single-stranded and double-stranded RNA. The sequence is that of Ribonuclease pancreatic (RNASE1) from Balaenoptera acutorostrata (Common minke whale).